The chain runs to 473 residues: Photosystem II CP43 reaction center protein (473 aa).

Residues 1-14 (MKTLYSLRRSYPVE) constitute a propeptide that is removed on maturation. Position 15 is an N-acetylthreonine (Thr15). Thr15 carries the post-translational modification Phosphothreonine. 5 consecutive transmembrane segments (helical) span residues 69–93 (LFEV…PHLA), 134–155 (LIGP…KDRN), 178–200 (KALY…RKIT), 255–275 (KPFA…LSYS), and 291–312 (WFNN…ASQA). Glu367 is a binding site for [CaMn4O5] cluster. Residues 447-471 (RARAAAAGFEKGIDRDFEPVLSMTP) traverse the membrane as a helical segment.

It belongs to the PsbB/PsbC family. PsbC subfamily. In terms of assembly, PSII is composed of 1 copy each of membrane proteins PsbA, PsbB, PsbC, PsbD, PsbE, PsbF, PsbH, PsbI, PsbJ, PsbK, PsbL, PsbM, PsbT, PsbX, PsbY, PsbZ, Psb30/Ycf12, at least 3 peripheral proteins of the oxygen-evolving complex and a large number of cofactors. It forms dimeric complexes. Requires Binds multiple chlorophylls and provides some of the ligands for the Ca-4Mn-5O cluster of the oxygen-evolving complex. It may also provide a ligand for a Cl- that is required for oxygen evolution. PSII binds additional chlorophylls, carotenoids and specific lipids. as cofactor.

Its subcellular location is the plastid. It is found in the chloroplast thylakoid membrane. Its function is as follows. One of the components of the core complex of photosystem II (PSII). It binds chlorophyll and helps catalyze the primary light-induced photochemical processes of PSII. PSII is a light-driven water:plastoquinone oxidoreductase, using light energy to abstract electrons from H(2)O, generating O(2) and a proton gradient subsequently used for ATP formation. In Pinus thunbergii (Japanese black pine), this protein is Photosystem II CP43 reaction center protein.